The sequence spans 180 residues: Ribonuclease M5 (180 aa).

The Toprim domain occupies 5 to 90 (KQIIIVEGKT…NAFIKKDDIS (86 aa)). Positions 11, 59, and 61 each coordinate Mg(2+).

The protein belongs to the ribonuclease M5 family. Requires Mg(2+) as cofactor.

It is found in the cytoplasm. It carries out the reaction Endonucleolytic cleavage of RNA, removing 21 and 42 nucleotides, respectively, from the 5'- and 3'-termini of a 5S-rRNA precursor.. Its function is as follows. Required for correct processing of both the 5' and 3' ends of 5S rRNA precursor. Cleaves both sides of a double-stranded region yielding mature 5S rRNA in one step. In Mycoplasma capricolum subsp. capricolum (strain California kid / ATCC 27343 / NCTC 10154), this protein is Ribonuclease M5.